A 418-amino-acid chain; its full sequence is Serine hydroxymethyltransferase (418 aa).

(6S)-5,6,7,8-tetrahydrofolate-binding positions include L121 and 125 to 127 (GHL). K230 carries the post-translational modification N6-(pyridoxal phosphate)lysine. Position 355–357 (355–357 (SPF)) interacts with (6S)-5,6,7,8-tetrahydrofolate.

It belongs to the SHMT family. Homodimer. Pyridoxal 5'-phosphate is required as a cofactor.

The protein localises to the cytoplasm. The enzyme catalyses (6R)-5,10-methylene-5,6,7,8-tetrahydrofolate + glycine + H2O = (6S)-5,6,7,8-tetrahydrofolate + L-serine. Its pathway is one-carbon metabolism; tetrahydrofolate interconversion. It participates in amino-acid biosynthesis; glycine biosynthesis; glycine from L-serine: step 1/1. Its function is as follows. Catalyzes the reversible interconversion of serine and glycine with tetrahydrofolate (THF) serving as the one-carbon carrier. This reaction serves as the major source of one-carbon groups required for the biosynthesis of purines, thymidylate, methionine, and other important biomolecules. Also exhibits THF-independent aldolase activity toward beta-hydroxyamino acids, producing glycine and aldehydes, via a retro-aldol mechanism. The protein is Serine hydroxymethyltransferase of Streptococcus pyogenes serotype M5 (strain Manfredo).